The sequence spans 85 residues: Protein MC005 (85 aa).

In terms of assembly, interacts with host IKBKG; this interaction prevents NF-kappa-B activation.

Its subcellular location is the host cytoplasm. In terms of biological role, plays a role in the inhibition of the host NF-kappa-B pathway by preventing ubiquitin binding-dependent regulation of host IKBKB activation by IKBKG/NEMO. The chain is Protein MC005 (MC005L) from Molluscum contagiosum virus subtype 1 (MOCV).